A 201-amino-acid chain; its full sequence is Ras-related protein Rab-1B (201 aa).

Position 1 is an N-acetylmethionine (Met-1). Residues Ser-17, Gly-18, Val-19, Gly-20, Lys-21, Ser-22, Cys-23, Tyr-33, Thr-34, Glu-35, Ser-36, Ser-39, and Thr-40 each coordinate GTP. Ser-22 serves as a coordination point for Mg(2+). Residues Asp-30–Phe-45 carry the Switch 1 motif. The Mg(2+) site is built by Thr-40 and Asp-63. The segment at Thr-64–Gly-83 is switch 2 region; required for interaction with REP1/CHM. The short motif at Ala-65–Gly-80 is the Switch 2 element. 7 residues coordinate GTP: Gly-66, Asn-121, Lys-122, Asp-124, Ser-151, Ala-152, and Lys-153. The tract at residues Gly-174 to Cys-201 is disordered. Residues Cys-200 and Cys-201 are each lipidated (S-geranylgeranyl cysteine). Cys-201 bears the Cysteine methyl ester mark.

The protein belongs to the small GTPase superfamily. Rab family. In terms of assembly, interacts with MICAL1 and MICAL2. Interacts (in GTP-bound form) with MICALCL, MICAL1 and MILCAL3. Interacts with GDI1; the interaction requires the GDP-bound state. Interacts with CHM/REP1; the interaction requires the GDP-bound form and is necessary for prenylation by GGTase II. Interacts with RabGAP TBC1D20. Interacts (in GDP-bound form) with lipid phosphatase MTMR6 (via GRAM domain); the interaction regulates MTMR6 recruitment to the endoplasmic reticulum-Golgi intermediate compartment. Interacts (in GDP-bound form) with lipid phosphatase MTMR7. Mg(2+) serves as cofactor. In terms of processing, prenylated; by GGTase II, only after interaction of the substrate with Rab escort protein 1 (REP1).

Its subcellular location is the cytoplasm. The protein resides in the membrane. It localises to the preautophagosomal structure membrane. It is found in the perinuclear region. It catalyses the reaction GTP + H2O = GDP + phosphate + H(+). Its activity is regulated as follows. Regulated by guanine nucleotide exchange factors (GEFs) which promote the exchange of bound GDP for free GTP. Regulated by GTPase activating proteins (GAPs) including TBC1D20 which increases the GTP hydrolysis activity. Inhibited by GDP dissociation inhibitors (GDIs). In terms of biological role, the small GTPases Rab are key regulators of intracellular membrane trafficking, from the formation of transport vesicles to their fusion with membranes. Rabs cycle between an inactive GDP-bound form and an active GTP-bound form that is able to recruit to membranes different set of downstream effectors directly responsible for vesicle formation, movement, tethering and fusion. Plays a role in the initial events of the autophagic vacuole development which take place at specialized regions of the endoplasmic reticulum. Regulates vesicular transport between the endoplasmic reticulum and successive Golgi compartments. Required to modulate the compacted morphology of the Golgi. Promotes the recruitment of lipid phosphatase MTMR6 to the endoplasmic reticulum-Golgi intermediate compartment. The chain is Ras-related protein Rab-1B (RAB1B) from Macaca fascicularis (Crab-eating macaque).